Reading from the N-terminus, the 174-residue chain is Shikimate kinase 2 (174 aa).

12-17 is a binding site for ATP; sequence GCGKTT. Positions 16 and 32 each coordinate Mg(2+). Positions 34, 58, and 79 each coordinate substrate. An LID domain region spans residues 112–126; it reads QAAPEEDLRPTLTGK. Arginine 120 lines the ATP pocket. Arginine 139 provides a ligand contact to substrate.

The protein belongs to the shikimate kinase family. AroL subfamily. Monomer. Mg(2+) serves as cofactor.

Its subcellular location is the cytoplasm. It catalyses the reaction shikimate + ATP = 3-phosphoshikimate + ADP + H(+). The protein operates within metabolic intermediate biosynthesis; chorismate biosynthesis; chorismate from D-erythrose 4-phosphate and phosphoenolpyruvate: step 5/7. In terms of biological role, catalyzes the specific phosphorylation of the 3-hydroxyl group of shikimic acid using ATP as a cosubstrate. In Escherichia coli O1:K1 / APEC, this protein is Shikimate kinase 2.